The primary structure comprises 241 residues: Guanosine phosphorylase (241 aa).

The protein belongs to the PNP/UDP phosphorylase family.

It catalyses the reaction guanosine + phosphate = alpha-D-ribose 1-phosphate + guanine. The enzyme catalyses a purine D-ribonucleoside + phosphate = a purine nucleobase + alpha-D-ribose 1-phosphate. The catalysed reaction is inosine + phosphate = alpha-D-ribose 1-phosphate + hypoxanthine. It carries out the reaction adenosine + phosphate = alpha-D-ribose 1-phosphate + adenine. Its activity is regulated as follows. Activity is higher at low KCl concentrations. Phosphorylase involved in the non-carboxylating pentose bisphosphate pathway, a nucleoside degradation pathway present in some halophilic archaea. Catalyzes the phosphorolytic cleavage of guanosine to guanine and ribose-1-phosphate (R1P). Exhibits the highest activity toward guanosine, but also shows lower activity against inosine and adenosine. This is Guanosine phosphorylase from Halorubrum lacusprofundi (strain ATCC 49239 / DSM 5036 / JCM 8891 / ACAM 34).